A 293-amino-acid chain; its full sequence is Bifunctional protein FolD (293 aa).

NADP(+) contacts are provided by residues Gly-164–Ser-166, Ser-193, and Thr-234.

The protein belongs to the tetrahydrofolate dehydrogenase/cyclohydrolase family. As to quaternary structure, homodimer.

The catalysed reaction is (6R)-5,10-methylene-5,6,7,8-tetrahydrofolate + NADP(+) = (6R)-5,10-methenyltetrahydrofolate + NADPH. It carries out the reaction (6R)-5,10-methenyltetrahydrofolate + H2O = (6R)-10-formyltetrahydrofolate + H(+). Its pathway is one-carbon metabolism; tetrahydrofolate interconversion. Its function is as follows. Catalyzes the oxidation of 5,10-methylenetetrahydrofolate to 5,10-methenyltetrahydrofolate and then the hydrolysis of 5,10-methenyltetrahydrofolate to 10-formyltetrahydrofolate. This chain is Bifunctional protein FolD, found in Azobacteroides pseudotrichonymphae genomovar. CFP2.